The sequence spans 380 residues: Alpha-N-acetylneuraminate alpha-2,8-sialyltransferase ST8SIA3 (380 aa).

The Cytoplasmic segment spans residues 1–17 (MRNCKMARVASVLGLVM). Residues 18 to 33 (LSVALLILSLISYVSL) form a helical; Signal-anchor for type II membrane protein membrane-spanning segment. The Lumenal segment spans residues 34–380 (KKENIFTTPK…LTKLTLSHCA (347 aa)). 2 N-linked (GlcNAc...) asparagine glycosylation sites follow: Asn-93 and Asn-113. 2 disulfide bridges follow: Cys-162/Cys-313 and Cys-176/Cys-379. 2 residues coordinate CMP-N-acetyl-beta-neuraminate: Asn-167 and Asn-190. An N-linked (GlcNAc...) asparagine glycan is attached at Asn-206. Residues Ser-300, Thr-301, Gly-302, Trp-322, Tyr-336, and His-337 each contribute to the CMP-N-acetyl-beta-neuraminate site. Residue His-354 is the Proton donor/acceptor of the active site.

Belongs to the glycosyltransferase 29 family. Homodimer. Expressed in neurons in brain with higher expression in the striatum than in the hippocampus, cortex, and cerebellum (at protein level). Expressed in testes.

The protein localises to the golgi apparatus membrane. The catalysed reaction is a ganglioside GM3 (d18:1(4E)) + CMP-N-acetyl-beta-neuraminate = a ganglioside GD3 (d18:1(4E)) + CMP + H(+). It carries out the reaction a ganglioside GM3 + CMP-N-acetyl-beta-neuraminate = a ganglioside GD3 + CMP + H(+). The enzyme catalyses an N-acetyl-alpha-neuraminyl-(2-&gt;3)-beta-D-galactosyl derivative + CMP-N-acetyl-beta-neuraminate = an N-acetyl-alpha-neuraminyl-(2-&gt;8)-N-acetyl-alpha-neuraminyl-(2-&gt;3)-beta-D-galactosyl derivative + CMP + H(+). It catalyses the reaction an N-acetyl-alpha-neuraminyl-(2-&gt;3)-beta-D-galactosyl-(1-&gt;4)-N-acetyl-beta-D-glucosaminyl derivative + CMP-N-acetyl-beta-neuraminate = an alpha-Neu5Ac-(2-&gt;8)-alpha-Neu5Ac-(2-&gt;3)-beta-D-Gal-(1-&gt;4)-beta-D-GlcNAc derivative + CMP + H(+). It functions in the pathway protein modification; protein glycosylation. Catalyzes the transfer of sialic acid from a CMP-linked sialic acid donor onto a terminal alpha-2,3-, alpha-2,6-, or alpha-2,8-linked sialic acid of an acceptor, such as N-linked oligosaccharides of glycoproteins and glycolipids through alpha-2,8-linkages. Forms oligosialic and polysialic acid on various sialylated N-acetyllactosamine oligosaccharides of glycoproteins, including FETUB N-glycans, a2-HS-glycoprotein (AHSG) and alpha 2,3-sialylated glycosphingolipids, such as alpha 2,3-sialylparagloboside and ganglioside GM3 and to a lesser extent NCAM1 N-glycans. However, it is much more specific to N-linked oligosaccharides of glycoproteins than glycosphingolipids. 2,3-sialylparagloboside served as the best acceptor substrate among the glycolipids. alpha-Neu5Ac-(2-&gt;8)-alpha-Neu5Ac-(2-&gt;3)-beta-D-Gal-(1-&gt;4)-6S-D-GlcNAc and monosialyl and disialyl N-acetyllactosamines are the best acceptor substrates among glycoproteins. May play critical role in the striatum by mediating the formation of disialylated and trisialylated terminal glycotopes on N- and O-glycans of specific striatal proteins, regulating their distribution in lipid rafts, affecting their interaction with other binding partners, and subsequently modulating striatal functions. This chain is Alpha-N-acetylneuraminate alpha-2,8-sialyltransferase ST8SIA3, found in Mus musculus (Mouse).